Consider the following 369-residue polypeptide: Pyrimidine monooxygenase RutA (369 aa).

Residues I49–K50, N115, E124, R140–Y141, and S190 contribute to the FMN site.

It belongs to the NtaA/SnaA/DszA monooxygenase family. RutA subfamily.

It catalyses the reaction uracil + FMNH2 + NADH + O2 = (Z)-3-ureidoacrylate + FMN + NAD(+) + H2O + H(+). It carries out the reaction thymine + FMNH2 + NADH + O2 = (Z)-2-methylureidoacrylate + FMN + NAD(+) + H2O + H(+). Functionally, catalyzes the pyrimidine ring opening between N-3 and C-4 by an unusual flavin hydroperoxide-catalyzed mechanism, adding oxygen atoms in the process to yield ureidoacrylate peracid, that immediately reacts with FMN forming ureidoacrylate and FMN-N(5)-oxide. The FMN-N(5)-oxide reacts spontaneously with NADH to produce FMN. Requires the flavin reductase RutF to regenerate FMN in vivo. In Acinetobacter baylyi (strain ATCC 33305 / BD413 / ADP1), this protein is Pyrimidine monooxygenase RutA.